Here is a 326-residue protein sequence, read N- to C-terminus: rRNA 2'-O-methyltransferase fibrillarin (326 aa).

A disordered region spans residues 1–84; the sequence is MAFQPGSRGG…GGARGGAKGG (84 aa). Residues 7 to 83 are compositionally biased toward gly residues; that stretch reads SRGGRGGARG…RGGARGGAKG (77 aa). Arginine 8, arginine 11, arginine 15, arginine 19, arginine 23, arginine 26, arginine 32, arginine 36, arginine 39, arginine 45, arginine 49, arginine 55, arginine 59, arginine 63, arginine 67, arginine 71, arginine 74, and arginine 78 each carry asymmetric dimethylarginine. S-adenosyl-L-methionine contacts are provided by residues 180-181, 199-200, 224-225, and 244-247; these read TS, EF, DA, and DVAQ.

Belongs to the methyltransferase superfamily. Fibrillarin family. As to quaternary structure, component of box C/D small nucleolar ribonucleoprotein (snoRNP) particles that contain SNU13, NOP1, SIK1/NOP56 and NOP58, plus a guide RNA. By homology to other fibrillarins, some or all of the N-terminal domain arginines are modified to asymmetric dimethylarginine (DMA).

The protein localises to the nucleus. It localises to the nucleolus. It carries out the reaction L-glutaminyl-[histone H2A] + S-adenosyl-L-methionine = N(5)-methyl-L-glutaminyl-[histone H2A] + S-adenosyl-L-homocysteine + H(+). In terms of biological role, S-adenosyl-L-methionine-dependent methyltransferase that has the ability to methylate both RNAs and proteins. Involved in pre-rRNA processing. Utilizes the methyl donor S-adenosyl-L-methionine to catalyze the site-specific 2'-hydroxyl methylation of ribose moieties in pre-ribosomal RNA. Site specificity is provided by a guide RNA that base pairs with the substrate. Methylation occurs at a characteristic distance from the sequence involved in base pairing with the guide RNA. Also acts as a protein methyltransferase by mediating methylation of 'Gln-105' of histone H2A (H2AQ105me), a modification that impairs binding of the FACT complex and is specifically present at 35S ribosomal DNA locus. This Eremothecium gossypii (strain ATCC 10895 / CBS 109.51 / FGSC 9923 / NRRL Y-1056) (Yeast) protein is rRNA 2'-O-methyltransferase fibrillarin (NOP1).